Consider the following 116-residue polypeptide: Large ribosomal subunit protein bL19 (116 aa).

Belongs to the bacterial ribosomal protein bL19 family.

Functionally, this protein is located at the 30S-50S ribosomal subunit interface and may play a role in the structure and function of the aminoacyl-tRNA binding site. In Solidesulfovibrio magneticus (strain ATCC 700980 / DSM 13731 / RS-1) (Desulfovibrio magneticus), this protein is Large ribosomal subunit protein bL19.